A 257-amino-acid polypeptide reads, in one-letter code: MNIIPAIDILGGRCVRLYQGDYKQTQIFNDNPVDVAKRWADEGATKLHLVDLDAAKVGQPVNQKTIEAIIKAVDIPIQVGGGLRNYSTVASLLALGVQQAILGTVAIEQPELVSDFCQKFPGQIIVGIDARDGKVATKGWLETSQVLATDLALQMAKLKVAAIIYTDIHRDGTLKGPNIEALRELATAVSIPVIASGGISSINDLLNLLALETIGVKGAIVGRALYTGGISLKEANQAVGQGRWQDVPPNLGSSTFV.

Asp-8 acts as the Proton acceptor in catalysis. The active-site Proton donor is Asp-129.

Belongs to the HisA/HisF family.

It is found in the cytoplasm. It carries out the reaction 1-(5-phospho-beta-D-ribosyl)-5-[(5-phospho-beta-D-ribosylamino)methylideneamino]imidazole-4-carboxamide = 5-[(5-phospho-1-deoxy-D-ribulos-1-ylimino)methylamino]-1-(5-phospho-beta-D-ribosyl)imidazole-4-carboxamide. The protein operates within amino-acid biosynthesis; L-histidine biosynthesis; L-histidine from 5-phospho-alpha-D-ribose 1-diphosphate: step 4/9. The protein is 1-(5-phosphoribosyl)-5-[(5-phosphoribosylamino)methylideneamino] imidazole-4-carboxamide isomerase of Trichodesmium erythraeum (strain IMS101).